The following is a 213-amino-acid chain: E3 ubiquitin-protein ligase NleG8 (213 aa).

Residues 136-189 are RING/U-box domain; sequence CPITLCVPETGVFVKNARCSKVCSLYDISALTEMLRRNASHPLSREAFTPGMIV. The short motif at 211 to 213 is the PDZ-binding motif element; it reads TRL.

This sequence belongs to the NleG E3 ligase family. As to quaternary structure, interacts with host GOPC (human protein).

It is found in the secreted. The protein resides in the host cytoplasm. The enzyme catalyses S-ubiquitinyl-[E2 ubiquitin-conjugating enzyme]-L-cysteine + [acceptor protein]-L-lysine = [E2 ubiquitin-conjugating enzyme]-L-cysteine + N(6)-ubiquitinyl-[acceptor protein]-L-lysine.. Functionally, effector proteins function to alter host cell physiology and promote bacterial survival in host tissues. This protein is an E3 ubiquitin-protein ligase that probably interferes with the host's ubiquitination pathway and targets host proteins for proteasomal degradation. Mice infected with a strain of bacteria deleted for this gene had an increased survival rate. Can be ubiquitinylated, and ubiquitinate ubiquitin, giving rise to polyubiquitin chains (in vitro). The polypeptide is E3 ubiquitin-protein ligase NleG8 (Citrobacter rodentium).